A 567-amino-acid polypeptide reads, in one-letter code: Glutamine-dependent NAD(+) synthetase (567 aa).

Residues 2-242 (LNLTLAQLNF…EDILTVTLDL (241 aa)) enclose the CN hydrolase domain. Glu-41 (proton acceptor; for glutaminase activity) is an active-site residue. Lys-109 serves as the catalytic For glutaminase activity. Tyr-115 provides a ligand contact to L-glutamine. Catalysis depends on Cys-145, which acts as the Nucleophile; for glutaminase activity. L-glutamine-binding residues include Ser-172 and Lys-178. Residues 287–567 (PKEEEEIYAA…RMPVTNKFFK (281 aa)) are ligase. 316–323 (GLSGGIDS) is an ATP binding site. Asn-399 provides a ligand contact to deamido-NAD(+). Thr-423 serves as a coordination point for ATP. Deamido-NAD(+) contacts are provided by Glu-428 and Lys-538.

The protein in the C-terminal section; belongs to the NAD synthetase family.

It catalyses the reaction deamido-NAD(+) + L-glutamine + ATP + H2O = L-glutamate + AMP + diphosphate + NAD(+) + H(+). It participates in cofactor biosynthesis; NAD(+) biosynthesis; NAD(+) from deamido-NAD(+) (L-Gln route): step 1/1. Functionally, catalyzes the ATP-dependent amidation of deamido-NAD to form NAD. Uses L-glutamine as a nitrogen source. In Aquifex aeolicus (strain VF5), this protein is Glutamine-dependent NAD(+) synthetase.